The chain runs to 116 residues: MSIETFTPTPLLFTPGAANKVKTLIDEEGNPRLKLRVFVTGGGCSGFQYGFTFDEDIADDDTVIERDGVGLVVDPMSFQYLAGSEVDYQEGLEGSRFVIKNPNAATTCGCGQSFSI.

Iron-sulfur cluster-binding residues include Cys-44, Cys-108, and Cys-110.

Belongs to the HesB/IscA family. As to quaternary structure, homodimer. Requires iron-sulfur cluster as cofactor.

Functionally, required for insertion of 4Fe-4S clusters for at least IspG. This is Iron-sulfur cluster insertion protein ErpA from Pseudomonas aeruginosa (strain LESB58).